The chain runs to 131 residues: Small ribosomal subunit protein uS8 (131 aa).

It belongs to the universal ribosomal protein uS8 family. In terms of assembly, part of the 30S ribosomal subunit. Contacts proteins S5 and S12.

In terms of biological role, one of the primary rRNA binding proteins, it binds directly to 16S rRNA central domain where it helps coordinate assembly of the platform of the 30S subunit. This Acinetobacter baylyi (strain ATCC 33305 / BD413 / ADP1) protein is Small ribosomal subunit protein uS8.